Reading from the N-terminus, the 229-residue chain is NAD(P)H-hydrate epimerase (229 aa).

In terms of domain architecture, YjeF N-terminal spans 9–216; the sequence is AISVDEELFN…KLEEKYAMNL (208 aa). 59 to 63 serves as a coordination point for (6S)-NADPHX; sequence NNGGD. Residues asparagine 60 and aspartate 124 each contribute to the K(+) site. (6S)-NADPHX is bound by residues 128 to 134 and aspartate 157; that span reads GFSFKPP. Position 160 (serine 160) interacts with K(+).

The protein belongs to the NnrE/AIBP family. Requires K(+) as cofactor.

The enzyme catalyses (6R)-NADHX = (6S)-NADHX. The catalysed reaction is (6R)-NADPHX = (6S)-NADPHX. Its function is as follows. Catalyzes the epimerization of the S- and R-forms of NAD(P)HX, a damaged form of NAD(P)H that is a result of enzymatic or heat-dependent hydration. This is a prerequisite for the S-specific NAD(P)H-hydrate dehydratase to allow the repair of both epimers of NAD(P)HX. In Anopheles gambiae (African malaria mosquito), this protein is NAD(P)H-hydrate epimerase.